Consider the following 424-residue polypeptide: Type II methyltransferase M.XorII (424 aa).

One can recognise an SAM-dependent MTase C5-type domain in the interval 4–367 (PIGIDLFAGA…GQIMKALRKK (364 aa)). Residue cysteine 83 is part of the active site. Positions 404 to 424 (RSRPVDRPAPRRHEERELVTA) are disordered. Basic and acidic residues predominate over residues 406–424 (RPVDRPAPRRHEERELVTA).

Belongs to the class I-like SAM-binding methyltransferase superfamily. C5-methyltransferase family.

The catalysed reaction is a 2'-deoxycytidine in DNA + S-adenosyl-L-methionine = a 5-methyl-2'-deoxycytidine in DNA + S-adenosyl-L-homocysteine + H(+). A methylase that recognizes the double-stranded sequence 5'-CGATCG-3', methylates C-? on both strands and protects the DNA from cleavage by the XorII endonuclease. This Xanthomonas oryzae pv. oryzae (strain KACC10331 / KXO85) protein is Type II methyltransferase M.XorII (xorIIM).